An 863-amino-acid chain; its full sequence is DNA mismatch repair protein MutS (863 aa).

615–622 (GPNMAGKS) lines the ATP pocket.

Belongs to the DNA mismatch repair MutS family.

Its function is as follows. This protein is involved in the repair of mismatches in DNA. It is possible that it carries out the mismatch recognition step. This protein has a weak ATPase activity. This chain is DNA mismatch repair protein MutS, found in Pelotomaculum thermopropionicum (strain DSM 13744 / JCM 10971 / SI).